Reading from the N-terminus, the 174-residue chain is Interferon gamma (174 aa).

Residues 1-23 (MNSTRCILALLLCLTQAMSGCYG) form the signal peptide. Gln-24 carries the post-translational modification Pyrrolidone carboxylic acid. 2 N-linked (GlcNAc...) asparagine glycosylation sites follow: Asn-39 and Asn-106.

This sequence belongs to the type II (or gamma) interferon family. As to quaternary structure, homodimer. Interacts with IFNGR1 (via extracellular domain); this interaction promotes IFNGR1 dimerization. As to expression, released primarily from activated T lymphocytes.

Its subcellular location is the secreted. Functionally, type II interferon produced by immune cells such as T-cells and NK cells that plays crucial roles in antimicrobial, antiviral, and antitumor responses by activating effector immune cells and enhancing antigen presentation. Primarily signals through the JAK-STAT pathway after interaction with its receptor IFNGR1 to affect gene regulation. Upon IFNG binding, IFNGR1 intracellular domain opens out to allow association of downstream signaling components JAK2, JAK1 and STAT1, leading to STAT1 activation, nuclear translocation and transcription of IFNG-regulated genes. Many of the induced genes are transcription factors such as IRF1 that are able to further drive regulation of a next wave of transcription. Plays a role in class I antigen presentation pathway by inducing a replacement of catalytic proteasome subunits with immunoproteasome subunits. In turn, increases the quantity, quality, and repertoire of peptides for class I MHC loading. Increases the efficiency of peptide generation also by inducing the expression of activator PA28 that associates with the proteasome and alters its proteolytic cleavage preference. Up-regulates as well MHC II complexes on the cell surface by promoting expression of several key molecules such as cathepsins B/CTSB, H/CTSH, and L/CTSL. Participates in the regulation of hematopoietic stem cells during development and under homeostatic conditions by affecting their development, quiescence, and differentiation. This is Interferon gamma (IFNG) from Phodopus sungorus (Striped hairy-footed hamster).